The following is a 377-amino-acid chain: TelA-like protein SSP1345 (377 aa).

The segment covering 1 to 18 (MAREQDSINSHPLDKYID) has biased composition (basic and acidic residues). The tract at residues 1-39 (MAREQDSINSHPLDKYIDENSANESEIIKSSSQFSHEDQ) is disordered. Over residues 20 to 34 (NSANESEIIKSSSQF) the composition is skewed to polar residues.

This sequence belongs to the TelA family.

In Staphylococcus saprophyticus subsp. saprophyticus (strain ATCC 15305 / DSM 20229 / NCIMB 8711 / NCTC 7292 / S-41), this protein is TelA-like protein SSP1345.